A 264-amino-acid chain; its full sequence is 3-methyl-2-oxobutanoate hydroxymethyltransferase (264 aa).

2 residues coordinate Mg(2+): Asp45 and Asp84. 3-methyl-2-oxobutanoate-binding positions include 45–46, Asp84, and Lys112; that span reads DS. Glu114 lines the Mg(2+) pocket. The Proton acceptor role is filled by Glu181.

It belongs to the PanB family. As to quaternary structure, homodecamer; pentamer of dimers. Mg(2+) is required as a cofactor.

The protein resides in the cytoplasm. The catalysed reaction is 3-methyl-2-oxobutanoate + (6R)-5,10-methylene-5,6,7,8-tetrahydrofolate + H2O = 2-dehydropantoate + (6S)-5,6,7,8-tetrahydrofolate. It functions in the pathway cofactor biosynthesis; (R)-pantothenate biosynthesis; (R)-pantoate from 3-methyl-2-oxobutanoate: step 1/2. Catalyzes the reversible reaction in which hydroxymethyl group from 5,10-methylenetetrahydrofolate is transferred onto alpha-ketoisovalerate to form ketopantoate. The chain is 3-methyl-2-oxobutanoate hydroxymethyltransferase from Shewanella sp. (strain MR-7).